The sequence spans 128 residues: DNA-directed RNA polymerase subunit omega (128 aa).

Residues 87–106 (ARSSQAAPKSAPGQEIGKSF) form a disordered region.

It belongs to the RNA polymerase subunit omega family. As to quaternary structure, the RNAP catalytic core consists of 2 alpha, 1 beta, 1 beta' and 1 omega subunit. When a sigma factor is associated with the core the holoenzyme is formed, which can initiate transcription.

The catalysed reaction is RNA(n) + a ribonucleoside 5'-triphosphate = RNA(n+1) + diphosphate. Functionally, promotes RNA polymerase assembly. Latches the N- and C-terminal regions of the beta' subunit thereby facilitating its interaction with the beta and alpha subunits. This is DNA-directed RNA polymerase subunit omega from Anaplasma marginale (strain St. Maries).